We begin with the raw amino-acid sequence, 565 residues long: Urocanate hydratase (565 aa).

NAD(+) contacts are provided by residues 61-62 (GG), Gln-139, 185-187 (GMG), Glu-205, Arg-210, 251-252 (NA), 272-276 (QTSAH), 282-283 (YL), and Tyr-331. The active site involves Cys-419. The segment at 453–472 (LDSGSVSSPNRETESMKDGS) is disordered. Residues 463-472 (RETESMKDGS) are compositionally biased toward basic and acidic residues. Gly-501 contributes to the NAD(+) binding site.

It belongs to the urocanase family. It depends on NAD(+) as a cofactor.

It is found in the cytoplasm. It catalyses the reaction 4-imidazolone-5-propanoate = trans-urocanate + H2O. Its pathway is amino-acid degradation; L-histidine degradation into L-glutamate; N-formimidoyl-L-glutamate from L-histidine: step 2/3. In terms of biological role, catalyzes the conversion of urocanate to 4-imidazolone-5-propionate. The sequence is that of Urocanate hydratase from Pseudomonas syringae.